Here is a 630-residue protein sequence, read N- to C-terminus: 1-deoxy-D-xylulose-5-phosphate synthase (630 aa).

Residues His87 and Gly128 to Ser130 each bind thiamine diphosphate. Asp159 contributes to the Mg(2+) binding site. Residues Gly160–Ala161, Asn188, Phe295, and Glu377 contribute to the thiamine diphosphate site. Asn188 is a Mg(2+) binding site.

It belongs to the transketolase family. DXPS subfamily. In terms of assembly, homodimer. Mg(2+) is required as a cofactor. It depends on thiamine diphosphate as a cofactor.

The enzyme catalyses D-glyceraldehyde 3-phosphate + pyruvate + H(+) = 1-deoxy-D-xylulose 5-phosphate + CO2. Its pathway is metabolic intermediate biosynthesis; 1-deoxy-D-xylulose 5-phosphate biosynthesis; 1-deoxy-D-xylulose 5-phosphate from D-glyceraldehyde 3-phosphate and pyruvate: step 1/1. Its function is as follows. Catalyzes the acyloin condensation reaction between C atoms 2 and 3 of pyruvate and glyceraldehyde 3-phosphate to yield 1-deoxy-D-xylulose-5-phosphate (DXP). This chain is 1-deoxy-D-xylulose-5-phosphate synthase, found in Pseudomonas savastanoi pv. phaseolicola (strain 1448A / Race 6) (Pseudomonas syringae pv. phaseolicola (strain 1448A / Race 6)).